We begin with the raw amino-acid sequence, 310 residues long: Proline iminopeptidase (310 aa).

Residues Leu-41–Glu-288 enclose the AB hydrolase-1 domain. Residue Ser-116 is the Nucleophile of the active site. Asp-255 is an active-site residue. His-282 serves as the catalytic Proton donor.

Belongs to the peptidase S33 family. Part of the tricorn proteolytic complex.

The catalysed reaction is Release of N-terminal proline from a peptide.. In terms of biological role, cleaves H-Pro-AMC as well as a wide spectrum of amino acid substrates and several peptide substrates without a proline at the N-terminus. In conjunction with the three factors F1, F2 and F3, Tricorn degrades oligopeptides in a sequential manner, yielding free amino acids. This is Proline iminopeptidase (pip) from Saccharolobus solfataricus (strain ATCC 35092 / DSM 1617 / JCM 11322 / P2) (Sulfolobus solfataricus).